A 766-amino-acid chain; its full sequence is BMP/retinoic acid-inducible neural-specific protein 3 (766 aa).

A signal peptide spans 1 to 33 (MIWRRRAGAELSSLMALWEWIVLSLHCWVLAVA). The 191-residue stretch at 74 to 264 (RYKIYREFGR…FVQAALSYIA (191 aa)) folds into the MACPF domain. N168, N337, N456, N562, N609, and N641 each carry an N-linked (GlcNAc...) asparagine glycan.

It belongs to the BRINP family. As to expression, expressed in olfactory bulb, cerebellum and neuronal layers in hippocampus.

Its subcellular location is the secreted. It is found in the mitochondrion. Its function is as follows. Inhibits neuronal cell proliferation by negative regulation of the cell cycle transition. Promotes pituitary gonadotrope cell proliferation, migration and invasion, when overexpressed. May play a role in cell pituitary tumor development. This Rattus norvegicus (Rat) protein is BMP/retinoic acid-inducible neural-specific protein 3 (Brinp3).